The primary structure comprises 473 residues: Bifunctional protein GlmU (473 aa).

Positions 1 to 226 are pyrophosphorylase; it reads MRAPVAVVIL…AGEASGINDL (226 aa). UDP-N-acetyl-alpha-D-glucosamine is bound by residues 10 to 13, lysine 24, glutamine 75, 80 to 81, 102 to 104, glycine 136, glutamate 151, asparagine 166, and asparagine 224; these read LAAG, GT, and YGD. Position 104 (aspartate 104) interacts with Mg(2+). Residue asparagine 224 participates in Mg(2+) binding. The linker stretch occupies residues 227–247; that stretch reads VQLAEVEEAFQRRWARRLLQG. The interval 248 to 473 is N-acetyltransferase; sequence GLRLVAPHRF…TPASGGAKEE (226 aa). Positions 330 and 348 each coordinate UDP-N-acetyl-alpha-D-glucosamine. Histidine 360 serves as the catalytic Proton acceptor. 2 residues coordinate UDP-N-acetyl-alpha-D-glucosamine: tyrosine 363 and asparagine 374. Residues alanine 377, 383–384, serine 402, alanine 420, and arginine 437 contribute to the acetyl-CoA site; that span reads NY. Residues 439–473 are disordered; that stretch reads RARTIPGWQHPGLTGRRGPPDDNDATPASGGAKEE.

This sequence in the N-terminal section; belongs to the N-acetylglucosamine-1-phosphate uridyltransferase family. The protein in the C-terminal section; belongs to the transferase hexapeptide repeat family. As to quaternary structure, homotrimer. The cofactor is Mg(2+).

It is found in the cytoplasm. It carries out the reaction alpha-D-glucosamine 1-phosphate + acetyl-CoA = N-acetyl-alpha-D-glucosamine 1-phosphate + CoA + H(+). The catalysed reaction is N-acetyl-alpha-D-glucosamine 1-phosphate + UTP + H(+) = UDP-N-acetyl-alpha-D-glucosamine + diphosphate. The protein operates within nucleotide-sugar biosynthesis; UDP-N-acetyl-alpha-D-glucosamine biosynthesis; N-acetyl-alpha-D-glucosamine 1-phosphate from alpha-D-glucosamine 6-phosphate (route II): step 2/2. Its pathway is nucleotide-sugar biosynthesis; UDP-N-acetyl-alpha-D-glucosamine biosynthesis; UDP-N-acetyl-alpha-D-glucosamine from N-acetyl-alpha-D-glucosamine 1-phosphate: step 1/1. It participates in bacterial outer membrane biogenesis; LPS lipid A biosynthesis. Catalyzes the last two sequential reactions in the de novo biosynthetic pathway for UDP-N-acetylglucosamine (UDP-GlcNAc). The C-terminal domain catalyzes the transfer of acetyl group from acetyl coenzyme A to glucosamine-1-phosphate (GlcN-1-P) to produce N-acetylglucosamine-1-phosphate (GlcNAc-1-P), which is converted into UDP-GlcNAc by the transfer of uridine 5-monophosphate (from uridine 5-triphosphate), a reaction catalyzed by the N-terminal domain. This Halorhodospira halophila (strain DSM 244 / SL1) (Ectothiorhodospira halophila (strain DSM 244 / SL1)) protein is Bifunctional protein GlmU.